The chain runs to 175 residues: Crossover junction endodeoxyribonuclease RuvC (175 aa).

Active-site residues include aspartate 16, glutamate 76, and aspartate 148. Aspartate 16, glutamate 76, and aspartate 148 together coordinate Mg(2+).

The protein belongs to the RuvC family. Homodimer which binds Holliday junction (HJ) DNA. The HJ becomes 2-fold symmetrical on binding to RuvC with unstacked arms; it has a different conformation from HJ DNA in complex with RuvA. In the full resolvosome a probable DNA-RuvA(4)-RuvB(12)-RuvC(2) complex forms which resolves the HJ. Requires Mg(2+) as cofactor.

The protein resides in the cytoplasm. The catalysed reaction is Endonucleolytic cleavage at a junction such as a reciprocal single-stranded crossover between two homologous DNA duplexes (Holliday junction).. The RuvA-RuvB-RuvC complex processes Holliday junction (HJ) DNA during genetic recombination and DNA repair. Endonuclease that resolves HJ intermediates. Cleaves cruciform DNA by making single-stranded nicks across the HJ at symmetrical positions within the homologous arms, yielding a 5'-phosphate and a 3'-hydroxyl group; requires a central core of homology in the junction. The consensus cleavage sequence is 5'-(A/T)TT(C/G)-3'. Cleavage occurs on the 3'-side of the TT dinucleotide at the point of strand exchange. HJ branch migration catalyzed by RuvA-RuvB allows RuvC to scan DNA until it finds its consensus sequence, where it cleaves and resolves the cruciform DNA. This Rhodopseudomonas palustris (strain BisB18) protein is Crossover junction endodeoxyribonuclease RuvC.